We begin with the raw amino-acid sequence, 854 residues long: Selenocysteine insertion sequence-binding protein 2 (854 aa).

4 disordered regions span residues 332-351 (ADPK…DPSY), 356-394 (HIIH…KYEV), 417-445 (ERRD…KKSQ), and 488-619 (ECAS…PNHT). Composition is skewed to polar residues over residues 338-350 (SIPS…SDPS) and 361-372 (TQKSKASQGSDL). Positions 380 to 387 (KNKKKKEK) match the Nuclear localization signal motif. Residues 426–445 (KFQSKQQPQDNFKNNVKKSQ) are compositionally biased toward polar residues. Positions 536–547 (ILKERQERKQRL) are enriched in basic and acidic residues. Over residues 548-559 (QENAVSPAFTSD) the composition is skewed to polar residues. Acidic residues predominate over residues 560–572 (DTQDGESGGDDQF). The span at 593-611 (VEDKSEEPPGTELQRDTEA) shows a compositional bias: basic and acidic residues. The segment at 673–694 (LVLGLREVLKHLKLKKLKCVII) is RNA-binding. Residues 787-812 (EPRPQAPPSLPTQGPSCPAEDGPPAL) form a disordered region.

Expressed at high levels in testis.

It localises to the nucleus. The protein localises to the mitochondrion. Functionally, mRNA-binding protein that binds to the SECIS (selenocysteine insertion sequence) element present in the 3'-UTR of mRNAs encoding selenoproteins and facilitates the incorporation of the rare amino acid selenocysteine. Insertion of selenocysteine at UGA codons is mediated by SECISBP2 and EEFSEC: SECISBP2 (1) specifically binds the SECIS sequence once the 80S ribosome encounters an in-frame UGA codon and (2) contacts the RPS27A/eS31 of the 40S ribosome before ribosome stalling. (3) GTP-bound EEFSEC then delivers selenocysteinyl-tRNA(Sec) to the 80S ribosome and adopts a preaccommodated state conformation. (4) After GTP hydrolysis, EEFSEC dissociates from the assembly, selenocysteinyl-tRNA(Sec) accommodates, and peptide bond synthesis and selenoprotein elongation occur. This is Selenocysteine insertion sequence-binding protein 2 from Homo sapiens (Human).